The following is a 495-amino-acid chain: Dihydrolipoyl dehydrogenase, mitochondrial (495 aa).

Residues 59-68 (EKNATLGGTC), Lys-77, and 169-171 (SGS) each bind FAD. A disulfide bridge connects residues Cys-68 and Cys-73. NAD(+) is bound by residues 206 to 213 (GAGVIGLE), Glu-229, Val-264, and Gly-299. Residues Asp-340 and 346–349 (MLAH) contribute to the FAD site. The Proton acceptor role is filled by His-472.

This sequence belongs to the class-I pyridine nucleotide-disulfide oxidoreductase family. The cofactor is FAD.

It localises to the mitochondrion matrix. The catalysed reaction is N(6)-[(R)-dihydrolipoyl]-L-lysyl-[protein] + NAD(+) = N(6)-[(R)-lipoyl]-L-lysyl-[protein] + NADH + H(+). In Caenorhabditis elegans, this protein is Dihydrolipoyl dehydrogenase, mitochondrial (dld-1).